The following is a 576-amino-acid chain: Arginine--tRNA ligase (576 aa).

A 'HIGH' region motif is present at residues 122–132; sequence PNVAKQMHVGH.

This sequence belongs to the class-I aminoacyl-tRNA synthetase family. As to quaternary structure, monomer.

Its subcellular location is the cytoplasm. It catalyses the reaction tRNA(Arg) + L-arginine + ATP = L-arginyl-tRNA(Arg) + AMP + diphosphate. The protein is Arginine--tRNA ligase of Yersinia pestis bv. Antiqua (strain Antiqua).